Here is a 348-residue protein sequence, read N- to C-terminus: MNKILTRSFSTGANFFASGKGKAPVRVAITGASGQIGYQLLFRIASGDMLGKDQPIILQCLELPGAMNSLKGVSMELDDCAFPLLKGIVQSDKPEEAFAGADYALLVGARPRSKGMERGDLLKANAEIFSVQGKALDKSANRDTLRVLVVGNPANTNALIAARNAPNIDPKRFSAMTRLDHNRGLAQLADKTGSAVTDIEKFCIWGNHSATQYPDINFGTVKGKSLVDTINDQKWVKDNFIPTVQQRGAAIIAARGLSSAASAASAAIDHMRDWTYGTNGQWTSMAIYSEGEYGADKGLYFSFPVIVDNKGKYEIVKGLKLDQFSQERFDATRKELLSEMDGVKELLP.

A mitochondrion-targeting transit peptide spans 1–9; it reads MNKILTRSF. NAD(+) is bound at residue 31-37; sequence GASGQIG. Positions 112 and 118 each coordinate substrate. NAD(+) is bound by residues Asn-125, Gln-132, and 150–152; that span reads VGN. 2 residues coordinate substrate: Asn-152 and Arg-183. Residue His-208 is the Proton acceptor of the active site.

It belongs to the LDH/MDH superfamily. MDH type 2 family. Homodimer.

It is found in the mitochondrion. It carries out the reaction (S)-malate + NAD(+) = oxaloacetate + NADH + H(+). Its function is as follows. Catalyzes the reversible oxidation of malate to oxaloacetate. The sequence is that of Probable malate dehydrogenase 2, mitochondrial (mdhB) from Dictyostelium discoideum (Social amoeba).